The primary structure comprises 402 residues: Propionate kinase (402 aa).

The ATP site is built by Asn-11 and Lys-18. Asn-11 serves as a coordination point for Mg(2+). Arg-86 contributes to the substrate binding site. The active-site Proton donor/acceptor is Asp-143. Residues His-175, 203 to 207, 278 to 280, and 326 to 330 each bind ATP; these read HLGNG, DLR, and GIGEN.

The protein belongs to the acetokinase family. TdcD subfamily. Homodimer. The cofactor is Mg(2+).

The catalysed reaction is propanoate + ATP = propanoyl phosphate + ADP. It participates in amino-acid degradation; L-threonine degradation via propanoate pathway; propanoate from L-threonine: step 4/4. In terms of biological role, catalyzes the conversion of propionyl phosphate and ADP to propionate and ATP. The protein is Propionate kinase of Citrobacter koseri (strain ATCC BAA-895 / CDC 4225-83 / SGSC4696).